The chain runs to 202 residues: Nucleoside triphosphate pyrophosphatase (202 aa).

Catalysis depends on Asp-79, which acts as the Proton acceptor.

The protein belongs to the Maf family. Requires a divalent metal cation as cofactor.

The protein localises to the cytoplasm. It catalyses the reaction a ribonucleoside 5'-triphosphate + H2O = a ribonucleoside 5'-phosphate + diphosphate + H(+). It carries out the reaction a 2'-deoxyribonucleoside 5'-triphosphate + H2O = a 2'-deoxyribonucleoside 5'-phosphate + diphosphate + H(+). Functionally, nucleoside triphosphate pyrophosphatase. May have a dual role in cell division arrest and in preventing the incorporation of modified nucleotides into cellular nucleic acids. The chain is Nucleoside triphosphate pyrophosphatase from Rhodopseudomonas palustris (strain BisB5).